A 319-amino-acid chain; its full sequence is tRNA-modifying protein YgfZ (319 aa).

The folate site is built by tryptophan 27 and tryptophan 189.

This sequence belongs to the tRNA-modifying YgfZ family.

The protein localises to the cytoplasm. Functionally, folate-binding protein involved in regulating the level of ATP-DnaA and in the modification of some tRNAs. It is probably a key factor in regulatory networks that act via tRNA modification, such as initiation of chromosomal replication. The sequence is that of tRNA-modifying protein YgfZ from Buchnera aphidicola subsp. Acyrthosiphon pisum (strain APS) (Acyrthosiphon pisum symbiotic bacterium).